The primary structure comprises 361 residues: MAAELAMGAELPSSPLAIEYVNDFDLMKFEVKKEPPEAERFCHRLPPGSLSSTPLSTPCSSVPSSPSFCAPSPGTGSSAGGGGSAAQAGGAPGPPSGGPGTVGGASGKAVLEDLYWMSGYQHHLNPEALNLTPEDAVEALIGSGHHSAHHGAHHPAAAAAYEAFRGQSFAGGGGGGADDMGAGHHHGAHHTAHHHHSAHHHHHHHHHHGGSGHHGGGAGHGGGGAGHHVRLEERFSDDQLVSMSVRELNRQLRGFSKEEVIRLKQKRRTLKNRGYAQSCRFKRVQQRHILESEKCQLQSQVEQLKLEVGRLAKERDLYKEKYEKLAGRGGPGGAGGAGFPREPSPAQAGPGAAKGAPDFFL.

Phosphoserine is present on serine 14. Lysine 32 is covalently cross-linked (Glycyl lysine isopeptide (Lys-Gly) (interchain with G-Cter in SUMO2)). Disordered stretches follow at residues 40–105 and 175–228; these read RFCH…VGGA and GGAD…AGHH. Positions 46–76 are enriched in low complexity; it reads PPGSLSSTPLSTPCSSVPSSPSFCAPSPGTG. Residue serine 49 is modified to Phosphoserine. Phosphothreonine occurs at positions 53 and 57. Residues serine 61 and serine 65 each carry the phosphoserine modification. The segment covering 183–211 has biased composition (basic residues); sequence GHHHGAHHTAHHHHSAHHHHHHHHHHGGS. A compositionally biased stretch (gly residues) spans 212–226; sequence GHHGGGAGHGGGGAG. The segment at 262–287 is basic motif; it reads RLKQKRRTLKNRGYAQSCRFKRVQQR. Positions 262-325 constitute a bZIP domain; it reads RLKQKRRTLK…DLYKEKYEKL (64 aa). Residues 290–311 form a leucine-zipper region; it reads LESEKCQLQSQVEQLKLEVGRL. The segment at 324–361 is disordered; the sequence is KLAGRGGPGGAGGAGFPREPSPAQAGPGAAKGAPDFFL. The segment covering 327–338 has biased composition (gly residues); sequence GRGGPGGAGGAG. Residues 345 to 361 are compositionally biased toward low complexity; it reads PAQAGPGAAKGAPDFFL.

Belongs to the bZIP family. In terms of assembly, forms homodimers. Monomers and dimers are able to bind DNA, but the off-rate is faster for monomers. Interacts with NEUROD1 and PDX1. May interact with MAFB, FOS, JUN and PCAF. Ubiquitinated, leading to its degradation by the proteasome. In terms of processing, phosphorylated at tyrosines.

The protein localises to the nucleus. Functionally, transcription factor that activates insulin gene expression. Acts synergistically with NEUROD1/BETA2 and PDX1. Binds the insulin enhancer C1/RIPE3b element. Binds to consensus TRE-type MARE 5'-TGCTGACTCAGCA-3' DNA sequence. This chain is Transcription factor MafA (Mafa), found in Rattus norvegicus (Rat).